The sequence spans 716 residues: Polyribonucleotide nucleotidyltransferase (716 aa).

Mg(2+) is bound by residues aspartate 493 and aspartate 499. The KH domain occupies 560 to 619 (PRMITIKINPEKIRDVIGKGGSVIRALTEETGTTIDISDDGVVTIASTSSEGMAEAKKRI). One can recognise an S1 motif domain in the interval 629-697 (GQVYEGTVLK…EKGRVRLSAK (69 aa)).

Belongs to the polyribonucleotide nucleotidyltransferase family. Mg(2+) is required as a cofactor.

It is found in the cytoplasm. It catalyses the reaction RNA(n+1) + phosphate = RNA(n) + a ribonucleoside 5'-diphosphate. Functionally, involved in mRNA degradation. Catalyzes the phosphorolysis of single-stranded polyribonucleotides processively in the 3'- to 5'-direction. In Paraburkholderia xenovorans (strain LB400), this protein is Polyribonucleotide nucleotidyltransferase.